The primary structure comprises 1392 residues: Leucine-rich PPR motif-containing protein, mitochondrial (1392 aa).

A mitochondrion-targeting transit peptide spans 1–77 (MSALLRPARW…LPEEPAPVRR (77 aa)). 14 PPR repeats span residues 125–159 (LLRS…GTVY), 160–194 (DVSH…NIQP), 195–229 (NRVT…DLPI), 230–264 (TEAV…GIEP), 265–299 (GPDT…DHYF), 300–334 (MDRD…RRSI), 402–436 (HSSS…GFPI), 437–471 (RTHY…GVDP), 677–708 (VGDP…ESDM), 709–745 (VIGG…SAVL), 746–783 (DTAK…IKDA), 784–820 (AVLS…AKPS), 821–856 (SNIS…VLPR), and 953–987 (RDQM…NLIP). An N6-acetyllysine mark is found at Lys151 and Lys186. Lys291 bears the N6-acetyllysine mark. Lys462 is subject to N6-acetyllysine. Lys749 is subject to N6-acetyllysine. Ser1025, Ser1026, and Ser1028 each carry phosphoserine. 6 PPR repeats span residues 1030–1064 (GDTV…DVVF), 1065–1101 (SSEA…GFTL), 1102–1136 (NGAA…EQVP), 1137–1173 (SELA…IELS), 1174–1208 (RMVF…ENQT), and 1315–1349 (NDRV…NMKL). Ser1137 carries the post-translational modification Phosphoserine.

As to quaternary structure, component of mRNP complexes associated with HNRPA1. Component of the complex, at least composed of LRPPRC, BECN1 and BCL2; the interactions prevent BECN1 from forming an autophagy-inducing complex with PIK3C3. Interacts with CECR2, HEBP2, MAP1S, UXT, PPARGC1A and FOXO1. Interacts (via N-terminus) with EIF4E; the interaction promotes association of EIF4E with 4ESE-containing mRNAs. Interacts with exportin XPO1/CRM1; interacts both alone and in complex with EIF4E and 4ESE-containing mRNAs to form an EIF4E-dependent mRNA export complex. Interacts with importin IPO8; the interaction occurs when LRPPRC is in its RNA-free form and returns LRPPRC to the nucleus for further export rounds. Interacts with BECN1. In terms of tissue distribution, widely expressed. Expressed in liver, brain and a subset of small diameter sensory neurons in the dorsal root ganglion (at protein level).

The protein resides in the mitochondrion. It localises to the nucleus. Its subcellular location is the nucleoplasm. It is found in the nucleus inner membrane. The protein localises to the nucleus outer membrane. Functionally, may play a role in RNA metabolism in both nuclei and mitochondria. In the nucleus binds to HNRPA1-associated poly(A) mRNAs and is part of nmRNP complexes at late stages of mRNA maturation which are possibly associated with nuclear mRNA export. Positively modulates nuclear export of mRNAs containing the EIF4E sensitivity element (4ESE) by binding simultaneously to both EIF4E and the 4ESE and acting as a platform for assembly for the RNA export complex. Also binds to exportin XPO1/CRM1 to engage the nuclear pore and traffic the bound mRNAs to the cytoplasm. May bind mature mRNA in the nucleus outer membrane. In mitochondria binds to poly(A) mRNA. Plays a role in translation or stability of mitochondrially encoded cytochrome c oxidase (COX) subunits. May be involved in transcription regulation. Cooperates with PPARGC1A to regulate certain mitochondrially encoded genes and gluconeogenic genes and may regulate docking of PPARGC1A to transcription factors. Seems to be involved in the transcription regulation of the multidrug-related genes MDR1 and MVP. Part of a nuclear factor that binds to the invMED1 element of MDR1 and MVP gene promoters. Binds single-stranded DNA. Required for maintaining mitochondrial potential. Suppresses the initiation of basal levels of autophagy and mitophagy by sustaining BCL2 levels. In Rattus norvegicus (Rat), this protein is Leucine-rich PPR motif-containing protein, mitochondrial (Lrpprc).